The chain runs to 481 residues: Glutamyl-tRNA(Gln) amidotransferase subunit A (481 aa).

Active-site charge relay system residues include lysine 76 and serine 151. Serine 175 functions as the Acyl-ester intermediate in the catalytic mechanism.

Belongs to the amidase family. GatA subfamily. As to quaternary structure, heterotrimer of A, B and C subunits.

It catalyses the reaction L-glutamyl-tRNA(Gln) + L-glutamine + ATP + H2O = L-glutaminyl-tRNA(Gln) + L-glutamate + ADP + phosphate + H(+). Its function is as follows. Allows the formation of correctly charged Gln-tRNA(Gln) through the transamidation of misacylated Glu-tRNA(Gln) in organisms which lack glutaminyl-tRNA synthetase. The reaction takes place in the presence of glutamine and ATP through an activated gamma-phospho-Glu-tRNA(Gln). The protein is Glutamyl-tRNA(Gln) amidotransferase subunit A of Neisseria meningitidis serogroup B (strain ATCC BAA-335 / MC58).